Here is a 34-residue protein sequence, read N- to C-terminus: METNDLGFVASLLFVLVPTVFLIILFIQTNSKEG.

The chain crosses the membrane as a helical span at residues 7-27 (GFVASLLFVLVPTVFLIILFI).

Belongs to the PsbM family. As to quaternary structure, PSII is composed of 1 copy each of membrane proteins PsbA, PsbB, PsbC, PsbD, PsbE, PsbF, PsbH, PsbI, PsbJ, PsbK, PsbL, PsbM, PsbT, PsbX, PsbY, PsbZ, Psb30/Ycf12, peripheral proteins PsbO, CyanoQ (PsbQ), PsbU, PsbV and a large number of cofactors. It forms dimeric complexes.

Its subcellular location is the cellular thylakoid membrane. In terms of biological role, one of the components of the core complex of photosystem II (PSII). PSII is a light-driven water:plastoquinone oxidoreductase that uses light energy to abstract electrons from H(2)O, generating O(2) and a proton gradient subsequently used for ATP formation. It consists of a core antenna complex that captures photons, and an electron transfer chain that converts photonic excitation into a charge separation. This subunit is found at the monomer-monomer interface. In Synechococcus sp. (strain WH7803), this protein is Photosystem II reaction center protein M.